Here is a 1387-residue protein sequence, read N- to C-terminus: MKNYWNCSVSDSEMNLKKKQMQKNFKNTCDSVSETFVGSGIPSSTFGKNGDIYLDRTTQYYYKKNNCIWIKYFCNGYCCFKGCKGGFFCQKGDKGNNGNNGNNGEKGQKGLKGIKGDIGDKGSKGDIGEKGDIGDKGDFGDKGIDGNKGSKGDIGDTGSKGDKGDKGDKGSKGDIGDKGSKGDIGVKGSKGDNGDKGSKGDIGVKGSKGDKGNKGDKGDNGLSILSGLDIPSPDLGMDGDLYLDTITDELYKKINGEWIEITNLKGEKGEIGSKGTKGDDGNKGNKGIKGDKGTTGDKGDKGDVGNKGDAGDKGDAGKKGEKGEMGNKGDIGDKGNDGIKGDFGSKGYKGDKGSKGTKGNNGFKGDRGDKGDKGSKGDKGDNGIKGNKGSKGDKGDNGIKGEKGESGSSILFGMGLPDQNQGEDGDIYIDTLTGELYRKVNGLWVPEIDIKGDKGEKGDRGNVGDKGEKGDIGLKGDKGEKGEKGNVGDKGDIGTKGDKGNVGDKGDIGIKGEKGDIGTKGDIGNKGDKGDKGDIGNKGNIGNKGEKGDKGVKGDIGEKGEKGDKGVKGDKGEKGEKGEKGEKGEKGDKGNKGDKGNKGDKGDKSDKGDKGNKGDKGNKGDKGNKGDKGDNGDKGDKGDNGDKGNKGDKGDNGDKGDKGDNGDKGNKGDKGDNGDKGDNGDKGNKGDNGDKGNKGDKGDNGDKGNKGDKGDNGDKGNKGDKGDKGDNGDKGDNGDKGDNGDKGDKGESGSSCQIENNDGVTIMSVCTPGIASIQAYQYEITDISGLENPYDPSNISGLNFKLFDTVKGAFRTGNFTADNMTNVGINSTAMGYHTQATGSGSFSFGNNTNGIISSNGIGSFVMGITTSSGVIISEGDGSIASGYSTNSSTIEIQNNSLSSIIHGYSISGSSMRLMEGNIGSMIIGSSETGSIVQSGSGSIASLINVRATSGTISIGSMSYGSKIFGYSNNGTITISDNVHGSQISGIVTNNGQMTIGTLSHGSYLHGYADTSSTISIGTNSFGSECIGLAQNNGTINNGDLSFGCRISGWTLSGLLSTGSGSCGTILYGVAVNSGIINTSGRNFGCFVGGYCAYYGKITIGANSFGTICHGTADASGTILVGTNSTGNLVVGSSQGTISLGSTNFGSVILGYTENSGSIISDGNNRGIFMHGYSSSASLYTASGSCGTVLMGYGTSGSAINVSGLGSFTFGYCPSSGEITQVLANGSFAFGRNNTTVSENSFSLGYGARSYMPGSMAFSSFATSGNPLRAGSAQTIKVLTRNLNTEFVLADGNFPTLPYTGYGNIKAKIIGSSGTMSVLYFQVFFDGSTHTVTIPTTPAGGQIVYSNPVAVSPAPTFTPVATVPGFSVTIANPGTQTFVASFGIVNIS.

A glycan (N-linked (GlcNAc...) asparagine; by host) is linked at Asn-6. Collagen-like domains are found at residues 95–154, 161–220, 266–325, 344–403, 450–508, and 512–751; these read GNNG…KGDI, GDKG…KGDN, GEKG…KGEM, GSKG…KGEK, IKGD…KGDI, and GEKG…SGSS. 3 disordered regions span residues 98–219, 268–422, and 454–753; these read GNNG…DKGD, KGEI…QNQG, and KGEK…SSCQ. Composition is skewed to basic and acidic residues over residues 114–181, 189–199, 207–219, 268–340, 364–382, 390–405, 454–535, and 544–747; these read IKGD…KGSK, SKGDNGDKGSK, SKGD…DKGD, KGEI…DGIK, KGDR…KGDN, SKGD…EKGE, KGEK…KGDI, and KGEK…DKGE. N-linked (GlcNAc...) asparagine; by host glycosylation is found at Asn-794, Asn-814, Asn-819, Asn-826, Asn-846, Asn-886, Asn-894, Asn-969, Asn-1032, Asn-1077, Asn-1123, Asn-1200, Asn-1224, Asn-1232, and Asn-1233.

Post-translationally, may be hydroxylated on lysine by the viral-encoded procollagen-lysine,2-oxoglutarate 5-dioxygenase.

It localises to the virion. Its function is as follows. May participate in the formation of a layer of cross-linked glycosylated fibrils at the viral surface thus giving it a hairy-like appearance. The protein is Collagen-like protein 6 of Acanthamoeba polyphaga mimivirus (APMV).